The primary structure comprises 309 residues: Protein RTM1 (309 aa).

7 consecutive transmembrane segments (helical) span residues 22 to 42 (AIAL…QVVW), 83 to 103 (TFSA…GYIA), 119 to 139 (IQAV…YMLF), 162 to 182 (FFVF…GLMA), 193 to 213 (LITA…INEF), 233 to 253 (WWFL…RSIV), and 278 to 298 (AVPM…GNIF).

It belongs to the lipid-translocating exporter (LTE) (TC 9.A.26.1) family.

It is found in the membrane. Functionally, confers resistance to molasses (to a particular toxic element present in some molasses). The protein is Protein RTM1 (RTM1) of Saccharomyces cerevisiae (Baker's yeast).